A 261-amino-acid polypeptide reads, in one-letter code: Putative [LysW]-aminoadipate/[LysW]-glutamate kinase (261 aa).

Residues 35–36 (GG), Arg62, and Asn162 each bind substrate.

Belongs to the acetylglutamate kinase family. LysZ subfamily.

It localises to the cytoplasm. It catalyses the reaction [amino-group carrier protein]-C-terminal-N-(1,4-dicarboxybutan-1-yl)-L-glutamine + ATP = [amino-group carrier protein]-C-terminal-N-(1-carboxy-5-phosphooxy-5-oxopentan-1-yl)-L-glutamine + ADP. The catalysed reaction is [amino-group carrier protein]-C-terminal-gamma-(L-glutamyl)-L-glutamate + ATP = [amino-group carrier protein]-C-terminal-gamma-(5-phospho-L-glutamyl)-L-glutamate + ADP. It participates in amino-acid biosynthesis; L-lysine biosynthesis via AAA pathway; L-lysine from L-alpha-aminoadipate (Thermus route): step 2/5. The protein operates within amino-acid biosynthesis; L-arginine biosynthesis. Functionally, involved in both the arginine and lysine biosynthetic pathways. Phosphorylates the LysW-bound precursors glutamate (for arginine biosynthesis), respectively alpha-aminoadipate (for lysine biosynthesis). In Pyrobaculum aerophilum (strain ATCC 51768 / DSM 7523 / JCM 9630 / CIP 104966 / NBRC 100827 / IM2), this protein is Putative [LysW]-aminoadipate/[LysW]-glutamate kinase.